The following is a 235-amino-acid chain: Phosphoribosylaminoimidazole-succinocarboxamide synthase (235 aa).

This sequence belongs to the SAICAR synthetase family.

The catalysed reaction is 5-amino-1-(5-phospho-D-ribosyl)imidazole-4-carboxylate + L-aspartate + ATP = (2S)-2-[5-amino-1-(5-phospho-beta-D-ribosyl)imidazole-4-carboxamido]succinate + ADP + phosphate + 2 H(+). It functions in the pathway purine metabolism; IMP biosynthesis via de novo pathway; 5-amino-1-(5-phospho-D-ribosyl)imidazole-4-carboxamide from 5-amino-1-(5-phospho-D-ribosyl)imidazole-4-carboxylate: step 1/2. In Clostridium botulinum (strain Eklund 17B / Type B), this protein is Phosphoribosylaminoimidazole-succinocarboxamide synthase.